A 268-amino-acid chain; its full sequence is Tryptophan synthase alpha chain (268 aa).

Residues Glu-49 and Asp-60 each act as proton acceptor in the active site.

The protein belongs to the TrpA family. As to quaternary structure, tetramer of two alpha and two beta chains.

The catalysed reaction is (1S,2R)-1-C-(indol-3-yl)glycerol 3-phosphate + L-serine = D-glyceraldehyde 3-phosphate + L-tryptophan + H2O. Its pathway is amino-acid biosynthesis; L-tryptophan biosynthesis; L-tryptophan from chorismate: step 5/5. In terms of biological role, the alpha subunit is responsible for the aldol cleavage of indoleglycerol phosphate to indole and glyceraldehyde 3-phosphate. The chain is Tryptophan synthase alpha chain from Escherichia coli O6:K15:H31 (strain 536 / UPEC).